We begin with the raw amino-acid sequence, 396 residues long: Tyrosine--tRNA ligase (396 aa).

Residues 43–52 (PSSPDIHLGH) carry the 'HIGH' region motif. A 'KMSKS' region motif is present at residues 227–231 (KMSKS). Lys230 is a binding site for ATP. Residues 338 to 396 (TGVIDFIILSGLAKSKSEARRLLEQGAVEINSEKISDQNTPVKCGDIIKAGKRRYSKAI) form the S4 RNA-binding domain.

Belongs to the class-I aminoacyl-tRNA synthetase family. TyrS type 2 subfamily. Homodimer.

Its subcellular location is the cytoplasm. It catalyses the reaction tRNA(Tyr) + L-tyrosine + ATP = L-tyrosyl-tRNA(Tyr) + AMP + diphosphate + H(+). In terms of biological role, catalyzes the attachment of tyrosine to tRNA(Tyr) in a two-step reaction: tyrosine is first activated by ATP to form Tyr-AMP and then transferred to the acceptor end of tRNA(Tyr). This Dehalococcoides mccartyi (strain CBDB1) protein is Tyrosine--tRNA ligase.